A 794-amino-acid polypeptide reads, in one-letter code: Protocadherin beta-6 (794 aa).

A signal peptide spans 1-27 (MMQTKVQNKKRQVAFFILLMLWGEVGS). Topologically, residues 28 to 688 (ESIQYSVLEE…AQADLLTVYL (661 aa)) are extracellular. Cadherin domains lie at 34 to 132 (VLEE…APEF), 137 to 241 (MLLK…VPEF), 246 to 345 (YEAQ…APEL), 350 to 449 (FISP…APAF), and 454 to 559 (YTLF…SPFV). N46 carries N-linked (GlcNAc...) asparagine glycosylation. Residues C95 and C101 are joined by a disulfide bond. An N-linked (GlcNAc...) asparagine glycan is attached at N183. N416 is a glycosylation site (N-linked (GlcNAc...) asparagine). A glycan (N-linked (GlcNAc...) asparagine) is linked at N565. The Cadherin 6 domain occupies 566–669 (GSAPCTELVP…LVDGFSQPYL (104 aa)). A helical transmembrane segment spans residues 689–709 (VVALASVSSLFLFSVLLFVAV). The Cytoplasmic portion of the chain corresponds to 710–794 (RLCRRSRAAS…PTSRNSFPFS (85 aa)). Residues 773 to 794 (PPQGTEREMEETPTSRNSFPFS) form a disordered region. Over residues 784–794 (TPTSRNSFPFS) the composition is skewed to polar residues.

Forms homodimers in trans (molecules expressed by two different cells). Forms promiscuous heterodimers in cis (at the plasma membrane of the same cell) with other protocadherins.

The protein resides in the cell membrane. In terms of biological role, calcium-dependent cell-adhesion protein involved in cells self-recognition and non-self discrimination. Thereby, it is involved in the establishment and maintenance of specific neuronal connections in the brain. The polypeptide is Protocadherin beta-6 (Pan troglodytes (Chimpanzee)).